We begin with the raw amino-acid sequence, 209 residues long: Uracil phosphoribosyltransferase (209 aa).

5-phospho-alpha-D-ribose 1-diphosphate contacts are provided by residues R79, R104, and 131–139; that span reads DPMLATGGS. Uracil contacts are provided by residues I194 and 199 to 201; that span reads GDA. A 5-phospho-alpha-D-ribose 1-diphosphate-binding site is contributed by D200.

This sequence belongs to the UPRTase family. It depends on Mg(2+) as a cofactor.

It catalyses the reaction UMP + diphosphate = 5-phospho-alpha-D-ribose 1-diphosphate + uracil. It participates in pyrimidine metabolism; UMP biosynthesis via salvage pathway; UMP from uracil: step 1/1. With respect to regulation, allosterically activated by GTP. Its function is as follows. Catalyzes the conversion of uracil and 5-phospho-alpha-D-ribose 1-diphosphate (PRPP) to UMP and diphosphate. This is Uracil phosphoribosyltransferase from Lactobacillus delbrueckii subsp. bulgaricus (strain ATCC 11842 / DSM 20081 / BCRC 10696 / JCM 1002 / NBRC 13953 / NCIMB 11778 / NCTC 12712 / WDCM 00102 / Lb 14).